Reading from the N-terminus, the 84-residue chain is Sec-independent protein translocase protein TatA (84 aa).

Residues 1–21 traverse the membrane as a helical segment; sequence MPNLGVPELLIIALVIFLLFG. Basic and acidic residues predominate over residues 42–57; that stretch reads EMDEMKTDGDKKELAE. The tract at residues 42–84 is disordered; it reads EMDEMKTDGDKKELAEKQAPTAEQQQAQDLAQPKSEQPNEHNA. The span at 62–77 shows a compositional bias: polar residues; that stretch reads TAEQQQAQDLAQPKSE.

The protein belongs to the TatA/E family. In terms of assembly, the Tat system comprises two distinct complexes: a TatABC complex, containing multiple copies of TatA, TatB and TatC subunits, and a separate TatA complex, containing only TatA subunits. Substrates initially bind to the TatABC complex, which probably triggers association of the separate TatA complex to form the active translocon.

Its subcellular location is the cell membrane. Part of the twin-arginine translocation (Tat) system that transports large folded proteins containing a characteristic twin-arginine motif in their signal peptide across membranes. TatA could form the protein-conducting channel of the Tat system. The sequence is that of Sec-independent protein translocase protein TatA from Corynebacterium jeikeium (strain K411).